Consider the following 748-residue polypeptide: Cytosolic phospholipase A2 (748 aa).

The phospholipid binding stretch occupies residues 1 to 178; that stretch reads MSFIDPYQHI…MKSFLGEENS (178 aa). A C2 domain is found at 6–124; sequence PYQHIVVEHQ…GEKKEVQLTF (119 aa). Ca(2+) contacts are provided by aspartate 40, threonine 41, aspartate 43, asparagine 65, aspartate 93, alanine 94, and asparagine 95. The region spanning 138–740 is the PLA2c domain; that stretch reads VCSSTDLRFS…SSVEARRFFN (603 aa). Residue serine 228 is the Nucleophile of the active site. The tract at residues 431–459 is disordered; that stretch reads SNDSSDSEDESQHPKGTENSEANEEYQNS. The span at 449–459 shows a compositional bias: polar residues; the sequence is NSEANEEYQNS. Serine 505 bears the Phosphoserine; by MAPK mark. Aspartate 549 serves as the catalytic Proton acceptor.

Post-translationally, activated by phosphorylation on a serine residue.

It localises to the cytoplasm. The protein localises to the cytoplasmic vesicle. The enzyme catalyses a 1,2-diacyl-sn-glycero-3-phosphocholine + H2O = a 1-acyl-sn-glycero-3-phosphocholine + a fatty acid + H(+). It catalyses the reaction a 1-acyl-sn-glycero-3-phosphocholine + H2O = sn-glycerol 3-phosphocholine + a fatty acid + H(+). Stimulated by agonists such as ATP, EGF, thrombin and bradykinin as well as by cytosolic Ca(2+). In terms of biological role, selectively hydrolyzes arachidonyl phospholipids in the sn-2 position releasing arachidonic acid. Together with its lysophospholipid activity, it is implicated in the initiation of the inflammatory response. In Gallus gallus (Chicken), this protein is Cytosolic phospholipase A2 (PLA2G4A).